The following is a 734-amino-acid chain: Photosystem I P700 chlorophyll a apoprotein A2 (734 aa).

The next 8 helical transmembrane spans lie at 46-69, 135-158, 175-199, 273-291, 330-353, 369-395, 417-439, and 517-535; these read IFAS…FHVA, LYTG…LHLQ, LNHH…HVAI, IAHH…GHMY, LHFQ…QHMY, AALY…IFFI, AIIS…LYVH, and FLVH…SIPV. [4Fe-4S] cluster contacts are provided by C559 and C568. Helical transmembrane passes span 575-596 and 643-665; these read AFYL…YWHW and LSVW…MFLI. 3 residues coordinate chlorophyll a: H654, M662, and Y670. W671 is a binding site for phylloquinone. Residues 707 to 727 form a helical membrane-spanning segment; sequence LVGLAHFSVGYIFTYAAFLIA.

The protein belongs to the PsaA/PsaB family. As to quaternary structure, the PsaA/B heterodimer binds the P700 chlorophyll special pair and subsequent electron acceptors. PSI consists of a core antenna complex that captures photons, and an electron transfer chain that converts photonic excitation into a charge separation. The eukaryotic PSI reaction center is composed of at least 11 subunits. P700 is a chlorophyll a/chlorophyll a' dimer, A0 is one or more chlorophyll a, A1 is one or both phylloquinones and FX is a shared 4Fe-4S iron-sulfur center. serves as cofactor.

It localises to the plastid. The protein localises to the chloroplast thylakoid membrane. It carries out the reaction reduced [plastocyanin] + hnu + oxidized [2Fe-2S]-[ferredoxin] = oxidized [plastocyanin] + reduced [2Fe-2S]-[ferredoxin]. In terms of biological role, psaA and PsaB bind P700, the primary electron donor of photosystem I (PSI), as well as the electron acceptors A0, A1 and FX. PSI is a plastocyanin-ferredoxin oxidoreductase, converting photonic excitation into a charge separation, which transfers an electron from the donor P700 chlorophyll pair to the spectroscopically characterized acceptors A0, A1, FX, FA and FB in turn. Oxidized P700 is reduced on the lumenal side of the thylakoid membrane by plastocyanin. The chain is Photosystem I P700 chlorophyll a apoprotein A2 from Angiopteris evecta (Mule's foot fern).